The chain runs to 469 residues: Ribosomal protein uS12 methylthiotransferase RimO (469 aa).

In terms of domain architecture, MTTase N-terminal spans 34-144; it reads NKIGFVSLGC…VLEHVHQFAP (111 aa). The [4Fe-4S] cluster site is built by Cys43, Cys79, Cys108, Cys176, Cys180, and Cys183. The region spanning 162–399 is the Radical SAM core domain; the sequence is LTPKHYAYLK…MLVQQEISAA (238 aa). One can recognise a TRAM domain in the interval 402–468; it reads QKRIGSTMKV…EYDLWGSLVR (67 aa).

The protein belongs to the methylthiotransferase family. RimO subfamily. [4Fe-4S] cluster serves as cofactor.

It is found in the cytoplasm. The catalysed reaction is L-aspartate(89)-[ribosomal protein uS12]-hydrogen + (sulfur carrier)-SH + AH2 + 2 S-adenosyl-L-methionine = 3-methylsulfanyl-L-aspartate(89)-[ribosomal protein uS12]-hydrogen + (sulfur carrier)-H + 5'-deoxyadenosine + L-methionine + A + S-adenosyl-L-homocysteine + 2 H(+). Catalyzes the methylthiolation of an aspartic acid residue of ribosomal protein uS12. The sequence is that of Ribosomal protein uS12 methylthiotransferase RimO from Vibrio vulnificus (strain CMCP6).